The primary structure comprises 422 residues: 26S proteasome non-ATPase regulatory subunit 11 (422 aa).

A2 is modified (N-acetylalanine). 2 positions are modified to phosphoserine: S14 and S23. Residues 224 to 392 (DWKTAYSYFY…GVLIIFDEPP (169 aa)) form the PCI domain. K274 participates in a covalent cross-link: Glycyl lysine isopeptide (Lys-Gly) (interchain with G-Cter in SUMO2).

This sequence belongs to the proteasome subunit S9 family. In terms of assembly, component of the 19S proteasome regulatory particle complex. The 26S proteasome consists of a 20S core particle (CP) and two 19S regulatory subunits (RP). The regulatory particle is made of a lid composed of 9 subunits including PSMD11, a base containing 6 ATPases and few additional components. In terms of processing, phosphorylated by AMPK.

The protein resides in the nucleus. Its subcellular location is the cytoplasm. It is found in the cytosol. In terms of biological role, component of the 26S proteasome, a multiprotein complex involved in the ATP-dependent degradation of ubiquitinated proteins. This complex plays a key role in the maintenance of protein homeostasis by removing misfolded or damaged proteins, which could impair cellular functions, and by removing proteins whose functions are no longer required. Therefore, the proteasome participates in numerous cellular processes, including cell cycle progression, apoptosis, or DNA damage repair. In the complex, PSMD11 is required for proteasome assembly. Plays a key role in increased proteasome activity in embryonic stem cells (ESCs): its high expression in ESCs promotes enhanced assembly of the 26S proteasome, followed by higher proteasome activity. The chain is 26S proteasome non-ATPase regulatory subunit 11 (PSMD11) from Bos taurus (Bovine).